Here is a 689-residue protein sequence, read N- to C-terminus: Glycine--tRNA ligase beta subunit (689 aa).

It belongs to the class-II aminoacyl-tRNA synthetase family. As to quaternary structure, tetramer of two alpha and two beta subunits.

The protein localises to the cytoplasm. It carries out the reaction tRNA(Gly) + glycine + ATP = glycyl-tRNA(Gly) + AMP + diphosphate. The sequence is that of Glycine--tRNA ligase beta subunit from Mannheimia succiniciproducens (strain KCTC 0769BP / MBEL55E).